Consider the following 36-residue polypeptide: Serine protease inhibitor 2 (36 aa).

A Pacifastin domain is found at 1 to 36 (EISCEPGTTFQDKCNTCRCGKDGKSAAGCTLKACPQ). 3 disulfide bridges follow: cysteine 4-cysteine 19, cysteine 14-cysteine 34, and cysteine 17-cysteine 29.

The protein belongs to the protease inhibitor I19 family. Expressed in hemolymph.

The protein resides in the secreted. Probable serine protease inhibitor. The chain is Serine protease inhibitor 2 from Melanoplus sanguinipes (Migratory grasshopper).